A 256-amino-acid chain; its full sequence is 5-keto-4-deoxy-D-glucarate aldolase (256 aa).

H50 functions as the Proton acceptor in the catalytic mechanism. Substrate is bound at residue Q151. Mg(2+) is bound at residue E153. Positions 178 and 179 each coordinate substrate. D179 provides a ligand contact to Mg(2+).

This sequence belongs to the HpcH/HpaI aldolase family. KDGluc aldolase subfamily. Homohexamer; trimer of dimers. Mg(2+) is required as a cofactor.

The enzyme catalyses 5-dehydro-4-deoxy-D-glucarate = 2-hydroxy-3-oxopropanoate + pyruvate. It catalyses the reaction 2-dehydro-3-deoxy-D-glucarate = 2-hydroxy-3-oxopropanoate + pyruvate. The protein operates within carbohydrate acid metabolism; galactarate degradation; D-glycerate from galactarate: step 2/3. Its function is as follows. Catalyzes the reversible retro-aldol cleavage of both 5-keto-4-deoxy-D-glucarate and 2-keto-3-deoxy-D-glucarate to pyruvate and tartronic semialdehyde. This chain is 5-keto-4-deoxy-D-glucarate aldolase, found in Salmonella agona (strain SL483).